The primary structure comprises 349 residues: Isopentenyl-diphosphate delta-isomerase (349 aa).

Residue R6–K7 coordinates substrate. FMN is bound by residues A62–T64, S93, and N122. Q152 provides a ligand contact to substrate. E153 serves as a coordination point for Mg(2+). FMN is bound by residues K184, T214, G258–G259, and A280–G281.

It belongs to the IPP isomerase type 2 family. Homooctamer. Dimer of tetramers. Requires FMN as cofactor. It depends on NADPH as a cofactor. Mg(2+) is required as a cofactor.

It localises to the cytoplasm. The catalysed reaction is isopentenyl diphosphate = dimethylallyl diphosphate. In terms of biological role, involved in the biosynthesis of isoprenoids. Catalyzes the 1,3-allylic rearrangement of the homoallylic substrate isopentenyl (IPP) to its allylic isomer, dimethylallyl diphosphate (DMAPP). In Bacillus anthracis (strain A0248), this protein is Isopentenyl-diphosphate delta-isomerase.